A 437-amino-acid chain; its full sequence is O-methyltransferase elcB (437 aa).

S-adenosyl-L-methionine is bound at residue Asp-269. The Proton acceptor role is filled by His-319.

It belongs to the class I-like SAM-binding methyltransferase superfamily. Cation-independent O-methyltransferase family. COMT subfamily.

It functions in the pathway secondary metabolite biosynthesis. Functionally, O-methyltransferase; part of the gene cluster that mediates the biosynthesis of elsinochrome C, a perelyenequinone phytotoxin structurally similar to cercosporin. The first step of elsinochrome C biosynthesis is performed by the polyketide synthase elcA which catalyzes the formation of nor-toralactone. The starter unit acyltransferase (SAT) domain of elcA initiates polyketide extension by the selective utilization of acetyl-CoA, which is elongated to the heptaketide in the beta-ketoacyl synthase (KS) domain by successive condensations with six malonyl units introduced by the malonyl acyltransferase (MAT) domain. The product template (PT) domain catalyzes C4-C9 and C2-C11 aldol cyclizations and dehydrations to a trihydroxynaphthalene, which is thought to be delivered to the thioesterase (TE) domain for product release. The bifunctional enzyme elcB then methylates nor-toralactone to toralactone before conducting an unusual oxidative aromatic ring opening. The next step in perylenequinone biosynthesis is an O-methylation at the nascent OH-6 of the elcB product performed by the O-methyltransferase elcD. The oxidative coupling of the two monomeric naphthol units in perylenequinone biosynthesis is catalyzed by the FAD-dependent monooxygenase elcE and the multicopper oxidase elcG. ElcG might catalyze the first intermolecular coupling in a regio- and stereo-selective manner via a phenol radical coupling mechanism and the elcE could forge the second C-C bond intramolecularly via a hydride transfer mechanism. The fasciclin domain-containing protein elcF might also play a role duting this step. The last piece of the puzzle in the biosynthesis of elsinochrome C is the additional annulation by enolate coupling to afford the dihydrobenzo(ghi)perylenequinone system, catalyzed by the FAD-dependent monooxygenase elcH. In Phaeosphaeria nodorum (strain SN15 / ATCC MYA-4574 / FGSC 10173) (Glume blotch fungus), this protein is O-methyltransferase elcB.